The sequence spans 394 residues: Elongation factor Tu (394 aa).

Residues 10 to 204 (KPHVNVGTIG…HLDTYIPEPE (195 aa)) enclose the tr-type G domain. Residues 19–26 (GHVDHGKT) form a G1 region. GTP is bound at residue 19 to 26 (GHVDHGKT). Residue Thr26 participates in Mg(2+) binding. Residues 60 to 64 (GITIN) form a G2 region. Residues 81 to 84 (DCPG) are G3. Residues 81–85 (DCPGH) and 136–139 (NKCD) each bind GTP. Positions 136–139 (NKCD) are G4. The segment at 174-176 (SAL) is G5.

This sequence belongs to the TRAFAC class translation factor GTPase superfamily. Classic translation factor GTPase family. EF-Tu/EF-1A subfamily. As to quaternary structure, monomer.

It localises to the cytoplasm. It carries out the reaction GTP + H2O = GDP + phosphate + H(+). Functionally, GTP hydrolase that promotes the GTP-dependent binding of aminoacyl-tRNA to the A-site of ribosomes during protein biosynthesis. The chain is Elongation factor Tu from Aeromonas hydrophila subsp. hydrophila (strain ATCC 7966 / DSM 30187 / BCRC 13018 / CCUG 14551 / JCM 1027 / KCTC 2358 / NCIMB 9240 / NCTC 8049).